The sequence spans 683 residues: Acetyl-coenzyme A synthetase 2 (683 aa).

CoA contacts are provided by residues 206–209 and threonine 325; that span reads RGGK. ATP is bound by residues 401–403 and 425–430; these read GEP and DTMWQT. 425 to 430 contributes to the AMP binding site; that stretch reads DTMWQT. Lysine 506 is covalently cross-linked (Glycyl lysine isopeptide (Lys-Gly) (interchain with G-Cter in ubiquitin)). Aspartate 516 and arginine 531 together coordinate ATP. AMP is bound by residues aspartate 516 and arginine 531. Position 539 (serine 539) interacts with CoA. Arginine 542 contacts ATP. Arginine 612 lines the CoA pocket. The residue at position 679 (serine 679) is a Phosphoserine.

It belongs to the ATP-dependent AMP-binding enzyme family.

The protein localises to the cytoplasm. Its subcellular location is the nucleus. It catalyses the reaction acetate + ATP + CoA = acetyl-CoA + AMP + diphosphate. Its pathway is carbohydrate metabolism; pyruvate metabolism. Catalyzes the production of acetyl-CoA. Provides the acetyl-CoA source for histone acetylation in the nucleus. 'Anaerobic' isozyme of acetyl-coenzyme A synthetase, which is required for growth on fermentable carbon sources such as glucose. May be involved in the PDH (pyruvate dehydrogenase complex) bypass. This Saccharomyces cerevisiae (strain ATCC 204508 / S288c) (Baker's yeast) protein is Acetyl-coenzyme A synthetase 2.